A 300-amino-acid polypeptide reads, in one-letter code: UDP-N-acetylenolpyruvoylglucosamine reductase (300 aa).

The FAD-binding PCMH-type domain occupies 30 to 194 (KVGGPADFFA…LAAVFSLAAG (165 aa)). R174 is an active-site residue. The active-site Proton donor is S223. Residue E293 is part of the active site.

The protein belongs to the MurB family. FAD serves as cofactor.

Its subcellular location is the cytoplasm. It catalyses the reaction UDP-N-acetyl-alpha-D-muramate + NADP(+) = UDP-N-acetyl-3-O-(1-carboxyvinyl)-alpha-D-glucosamine + NADPH + H(+). It participates in cell wall biogenesis; peptidoglycan biosynthesis. Functionally, cell wall formation. The protein is UDP-N-acetylenolpyruvoylglucosamine reductase of Geotalea uraniireducens (strain Rf4) (Geobacter uraniireducens).